A 404-amino-acid chain; its full sequence is Probable tRNA sulfurtransferase (404 aa).

The 106-residue stretch at Gln-60–Glu-165 folds into the THUMP domain. Residues Met-183–Leu-184, His-208–Phe-209, Arg-265, Gly-287, and Gln-296 contribute to the ATP site.

Belongs to the ThiI family.

Its subcellular location is the cytoplasm. The catalysed reaction is [ThiI sulfur-carrier protein]-S-sulfanyl-L-cysteine + a uridine in tRNA + 2 reduced [2Fe-2S]-[ferredoxin] + ATP + H(+) = [ThiI sulfur-carrier protein]-L-cysteine + a 4-thiouridine in tRNA + 2 oxidized [2Fe-2S]-[ferredoxin] + AMP + diphosphate. It catalyses the reaction [ThiS sulfur-carrier protein]-C-terminal Gly-Gly-AMP + S-sulfanyl-L-cysteinyl-[cysteine desulfurase] + AH2 = [ThiS sulfur-carrier protein]-C-terminal-Gly-aminoethanethioate + L-cysteinyl-[cysteine desulfurase] + A + AMP + 2 H(+). It functions in the pathway cofactor biosynthesis; thiamine diphosphate biosynthesis. Functionally, catalyzes the ATP-dependent transfer of a sulfur to tRNA to produce 4-thiouridine in position 8 of tRNAs, which functions as a near-UV photosensor. Also catalyzes the transfer of sulfur to the sulfur carrier protein ThiS, forming ThiS-thiocarboxylate. This is a step in the synthesis of thiazole, in the thiamine biosynthesis pathway. The sulfur is donated as persulfide by IscS. The polypeptide is Probable tRNA sulfurtransferase (Streptococcus pyogenes serotype M49 (strain NZ131)).